The primary structure comprises 663 residues: (R)-specific secondary-alkylsulfatase (663 aa).

Residues 1–28 form the signal peptide; it reads MSRFIRASQRRTLLATLIAATLAQPLLA. Residues histidine 179, histidine 181, aspartate 183, and histidine 184 each contribute to the Zn(2+) site. Residue glutamine 232 participates in sulfate binding. Zn(2+)-binding residues include glutamate 291 and aspartate 310. Sulfate is bound by residues 318 to 323 and arginine 328; that span reads NLLTPR. Histidine 355 contacts Zn(2+). Tyrosine 417 serves as a coordination point for sulfate.

This sequence belongs to the metallo-beta-lactamase superfamily. Type III sulfatase family. In terms of assembly, homodimer.

The enzyme catalyses an (R)-secondary-alkyl sulfate + H2O = an (S)-secondary-alcohol + sulfate.. Functionally, alkylsulfatase that catalyzes the enantioselective hydrolysis of secondary-alkylsulfates with strict inversion of configuration, leading to the formation of homochiral (S)-configurated alcohols and nonreacted sulfate esters. The substrate spectrum includes a range of linear, branched or cyclic sec-alkylsulfates. Can use sec-alkylsulfate esters bearing aromatic, olefinic and acetylenic moieties. Acts by cleaving the C-O bond, resulting in inversion at the carbon. The polypeptide is (R)-specific secondary-alkylsulfatase (Pseudomonas sp).